A 721-amino-acid chain; its full sequence is Polyribonucleotide nucleotidyltransferase (721 aa).

Aspartate 485 and aspartate 491 together coordinate Mg(2+). In terms of domain architecture, KH spans 552–611 (PKIYIVKIHPDKIREIIGPGGKVIRELQAMSNTRIEVDDSGTVKIAASTEEEARIAIKAV). Residues 621-689 (GEIYEGEVVR…PEGKIRLSRK (69 aa)) form the S1 motif domain. The disordered stretch occupies residues 687 to 721 (SRKALLPAPEKGEEDEKSAPRSRRPGGNSDRRNNR).

It belongs to the polyribonucleotide nucleotidyltransferase family. Requires Mg(2+) as cofactor.

It is found in the cytoplasm. The enzyme catalyses RNA(n+1) + phosphate = RNA(n) + a ribonucleoside 5'-diphosphate. Functionally, involved in mRNA degradation. Catalyzes the phosphorolysis of single-stranded polyribonucleotides processively in the 3'- to 5'-direction. This is Polyribonucleotide nucleotidyltransferase from Desulfosudis oleivorans (strain DSM 6200 / JCM 39069 / Hxd3) (Desulfococcus oleovorans).